Consider the following 489-residue polypeptide: Glutamyl-tRNA(Gln) amidotransferase subunit A (489 aa).

Active-site charge relay system residues include Lys-75 and Ser-150. The active-site Acyl-ester intermediate is Ser-174.

This sequence belongs to the amidase family. GatA subfamily. In terms of assembly, heterotrimer of A, B and C subunits.

It catalyses the reaction L-glutamyl-tRNA(Gln) + L-glutamine + ATP + H2O = L-glutaminyl-tRNA(Gln) + L-glutamate + ADP + phosphate + H(+). Allows the formation of correctly charged Gln-tRNA(Gln) through the transamidation of misacylated Glu-tRNA(Gln) in organisms which lack glutaminyl-tRNA synthetase. The reaction takes place in the presence of glutamine and ATP through an activated gamma-phospho-Glu-tRNA(Gln). The polypeptide is Glutamyl-tRNA(Gln) amidotransferase subunit A (Gloeobacter violaceus (strain ATCC 29082 / PCC 7421)).